The primary structure comprises 312 residues: Probable deoxyhypusine synthase (312 aa).

Residue Lys285 is the Nucleophile of the active site.

The protein belongs to the deoxyhypusine synthase family. The cofactor is NAD(+).

The catalysed reaction is [eIF5A protein]-L-lysine + spermidine = [eIF5A protein]-deoxyhypusine + propane-1,3-diamine. It functions in the pathway protein modification; eIF5A hypusination. In terms of biological role, catalyzes the NAD-dependent oxidative cleavage of spermidine and the subsequent transfer of the butylamine moiety of spermidine to the epsilon-amino group of a specific lysine residue of the eIF-5A precursor protein to form the intermediate deoxyhypusine residue. This chain is Probable deoxyhypusine synthase, found in Saccharolobus islandicus (strain Y.N.15.51 / Yellowstone #2) (Sulfolobus islandicus).